We begin with the raw amino-acid sequence, 145 residues long: Basic phospholipase A2 BFPA (145 aa).

Residues 1 to 27 (MNPAHLLVLLAVCVSLLGAANIPPQSL) form the signal peptide. Disulfide bonds link C38/C97, C52/C144, C54/C70, C69/C125, C76/C118, C86/C111, and C104/C116. Residues Y53, G55, and G57 each contribute to the Ca(2+) site. H73 is an active-site residue. D74 is a Ca(2+) binding site. D119 is a catalytic residue.

The protein belongs to the phospholipase A2 family. Group I subfamily. D49 sub-subfamily. Homodimer; disulfide-linked. It depends on Ca(2+) as a cofactor. Expressed by the venom gland.

Its subcellular location is the secreted. It carries out the reaction a 1,2-diacyl-sn-glycero-3-phosphocholine + H2O = a 1-acyl-sn-glycero-3-phosphocholine + a fatty acid + H(+). Snake venom phospholipase A2 (PLA2) that inhibits blood coagulation and shows bactericidal activities against both Gram-negative and -positive bacteria (E.coli, MIC=0.4 uM and S.aureus, MIC=0.1 uM). PLA2 catalyzes the calcium-dependent hydrolysis of the 2-acyl groups in 3-sn-phosphoglycerides. This chain is Basic phospholipase A2 BFPA, found in Bungarus fasciatus (Banded krait).